The chain runs to 138 residues: Histone H2B.3 (138 aa).

Basic and acidic residues-rich tracts occupy residues 1-18 and 26-38; these read MAPKAEKKPVAEKAEKTT and EKRPPASKEGGDK. A disordered region spans residues 1–46; sequence MAPKAEKKPVAEKAEKTTAAKKTKAEKRPPASKEGGDKKGKKKSKK. N6-acetyllysine is present on residues Lys7 and Lys27. Residue Lys134 forms a Glycyl lysine isopeptide (Lys-Gly) (interchain with G-Cter in ubiquitin) linkage.

Belongs to the histone H2B family. As to quaternary structure, the nucleosome is a histone octamer containing two molecules each of H2A, H2B, H3 and H4 assembled in one H3-H4 heterotetramer and two H2A-H2B heterodimers. The octamer wraps approximately 147 bp of DNA. Can be acetylated to form H2BK6ac and H2BK33ac. Post-translationally, monoubiquitinated to form H2BK143ub1; may give a specific tag for epigenetic transcriptional activation.

It localises to the nucleus. The protein resides in the chromosome. Functionally, core component of nucleosome. Nucleosomes wrap and compact DNA into chromatin, limiting DNA accessibility to the cellular machineries which require DNA as a template. Histones thereby play a central role in transcription regulation, DNA repair, DNA replication and chromosomal stability. DNA accessibility is regulated via a complex set of post-translational modifications of histones, also called histone code, and nucleosome remodeling. This Triticum aestivum (Wheat) protein is Histone H2B.3.